The sequence spans 404 residues: MRNINVQLNPLSDIEKLQVELVERKGLGHPDYIADAVAEEASRKLSLYYLKKYGVILHHNLDKTLVVGGQATPRFKGGDVIQPIYIVVAGRATTEVKTESGIEQIPVGTIIIESVKEWIRNNFRYLDAEKHLIVDYKIGKGSTDLVGIFEAGKRVPLSNDTSFGVGFAPFTKLEKLVYETERHLNSKQFKAKLPEVGEDIKVMGLRRGNEVDLTIAMATISELIEDVNHYINVKEQAKNKILDLASKIAPDYDVRIYVNTGDKIDKNILYLTVTGTSAEHGDDGMTGRGNRGVGLITPMRPMSLEATAGKNPVNHVGKLYNVLANLIANKIAQEVKDVKFSQVQVLGQIGRPIDDPLIANVDVITYDGKLNDETKNEISGIVDEMLSSFNKLTELILEGKATLF.

ATP is bound at residue 139–144; it reads GKGSTD.

This sequence belongs to the AdoMet synthase 2 family. Requires Mg(2+) as cofactor.

It carries out the reaction L-methionine + ATP + H2O = S-adenosyl-L-methionine + phosphate + diphosphate. Its pathway is amino-acid biosynthesis; S-adenosyl-L-methionine biosynthesis; S-adenosyl-L-methionine from L-methionine: step 1/1. Its function is as follows. Catalyzes the formation of S-adenosylmethionine from methionine and ATP. The chain is S-adenosylmethionine synthase from Saccharolobus islandicus (strain Y.N.15.51 / Yellowstone #2) (Sulfolobus islandicus).